The following is a 202-amino-acid chain: MCTGGCARCLGGTLIPLAFFGFLANILLFFPGGKVIDDNDHLSQEIWFFGGILGSGVLMIFPALVFLGLKNNDCCGCCGNEGCGKRFAMFTSTIFAVVGFLGAGYSFIISAISINKGPKCLMANSTWGYPFHDGDYLNDEALWNKCREPLNVVPWNLTLFSILLVVGGIQMVLCAIQVVNGLLGTLCGDCQCCGCCGGDGPV.

Residues 1–9 lie on the Cytoplasmic side of the membrane; the sequence is MCTGGCARC. A helical membrane pass occupies residues 10–30; sequence LGGTLIPLAFFGFLANILLFF. Residues 31–45 are Extracellular-facing; that stretch reads PGGKVIDDNDHLSQE. Residues 46–66 form a helical membrane-spanning segment; that stretch reads IWFFGGILGSGVLMIFPALVF. Topologically, residues 67-93 are cytoplasmic; the sequence is LGLKNNDCCGCCGNEGCGKRFAMFTST. A helical transmembrane segment spans residues 94 to 114; that stretch reads IFAVVGFLGAGYSFIISAISI. Residues 115–158 lie on the Extracellular side of the membrane; it reads NKGPKCLMANSTWGYPFHDGDYLNDEALWNKCREPLNVVPWNLT. N-linked (GlcNAc...) asparagine glycosylation is found at Asn-124 and Asn-156. The chain crosses the membrane as a helical span at residues 159–179; sequence LFSILLVVGGIQMVLCAIQVV. At 180–202 the chain is on the cytoplasmic side; it reads NGLLGTLCGDCQCCGCCGGDGPV.

The protein belongs to the L6 tetraspanin family. Post-translationally, N-glycosylated. Glycosylation is required for the growth inhibitory effect. As to expression, jejunum and liver.

Its subcellular location is the membrane. In terms of biological role, regulates the adhesive and proliferative status of intestinal epithelial cells. Can mediate density-dependent cell proliferation. In Homo sapiens (Human), this protein is Transmembrane 4 L6 family member 4 (TM4SF4).